A 555-amino-acid polypeptide reads, in one-letter code: MAETKKETLAEKVKRLSRGLRGSLVDSLKDEHTGSLRSDDQLLLKFHGMYQQDDRDRRDERALKKLERLYSFMIRLRIPGGMIGPVHWEALHNVAGENSTGTIKITTRQTVQLHGILKSKIKPTIKAFDSVFLDSIAACGDVNRNVTCTSNPAASPLHKEVFGYAGEISRSLLPKTRAYYEIWLDENLLAEKEEPEDPLYKDVYLPRKFKIAIAIPPYNDVDLFTNDIGLIAIIENGQLLGFNVAVGGGLGTTHGNPDTYPRVGTVFGFIPKKDILRVVYEIVTVQRDFGNREDRKLSRLKYTLDRLGVEFYKREVEKRAGISFESAKDFQFTTRSDDFGWKQDAAGNWHYTVFVENGRVCDEHGYNLKTALLEVSKTRRATFRFTCNQNLILSDIFPKDKDLIESILVKFGVHRKTAEVSPIRKNSIACVALNTCSLALAEAQRYLPSLIDKIEPILSKHGLSEEPISIRMTGCPNGCARPYISEIGLVGTSYGKYNLHVGADAEGYRLNKKYKEDLDESAILQELDGLFGKFSKDRKGKESFGDYINRIGILK.

The [4Fe-4S] cluster site is built by cysteine 430, cysteine 436, cysteine 475, and cysteine 479. Cysteine 479 is a siroheme binding site.

This sequence belongs to the nitrite and sulfite reductase 4Fe-4S domain family. Alpha(8)-beta(8). The alpha component is a flavoprotein, the beta component is a hemoprotein. It depends on siroheme as a cofactor. Requires [4Fe-4S] cluster as cofactor.

The enzyme catalyses hydrogen sulfide + 3 NADP(+) + 3 H2O = sulfite + 3 NADPH + 4 H(+). Its pathway is sulfur metabolism; hydrogen sulfide biosynthesis; hydrogen sulfide from sulfite (NADPH route): step 1/1. Component of the sulfite reductase complex that catalyzes the 6-electron reduction of sulfite to sulfide. This is one of several activities required for the biosynthesis of L-cysteine from sulfate. The polypeptide is Sulfite reductase [NADPH] hemoprotein beta-component (Leptospira biflexa serovar Patoc (strain Patoc 1 / Ames)).